The chain runs to 213 residues: Large ribosomal subunit protein uL1 (213 aa).

It belongs to the universal ribosomal protein uL1 family. In terms of assembly, part of the 50S ribosomal subunit.

In terms of biological role, binds directly to 23S rRNA. Probably involved in E site tRNA release. Protein L1 is also a translational repressor protein, it controls the translation of its operon by binding to its mRNA. This Methanosarcina acetivorans (strain ATCC 35395 / DSM 2834 / JCM 12185 / C2A) protein is Large ribosomal subunit protein uL1.